The following is a 94-amino-acid chain: Probable HNH endonuclease (94 aa).

This sequence belongs to the skunalikevirus HNH endonuclease family.

In terms of biological role, probable HNH endonuclease. The sequence is that of Probable HNH endonuclease from Lactococcus lactis (Lactococcus lactis bacteriophage SK1).